A 467-amino-acid chain; its full sequence is UDP-N-acetylmuramate--L-alanine ligase (467 aa).

ATP is bound at residue 114-120; sequence GTHGKTT.

This sequence belongs to the MurCDEF family.

The protein localises to the cytoplasm. It catalyses the reaction UDP-N-acetyl-alpha-D-muramate + L-alanine + ATP = UDP-N-acetyl-alpha-D-muramoyl-L-alanine + ADP + phosphate + H(+). The protein operates within cell wall biogenesis; peptidoglycan biosynthesis. Cell wall formation. In Azorhizobium caulinodans (strain ATCC 43989 / DSM 5975 / JCM 20966 / LMG 6465 / NBRC 14845 / NCIMB 13405 / ORS 571), this protein is UDP-N-acetylmuramate--L-alanine ligase.